Here is a 502-residue protein sequence, read N- to C-terminus: Glycerol kinase (502 aa).

An ADP-binding site is contributed by threonine 14. Threonine 14, threonine 15, and serine 16 together coordinate ATP. Position 14 (threonine 14) interacts with sn-glycerol 3-phosphate. ADP is bound at residue arginine 18. Positions 84, 85, 136, and 246 each coordinate sn-glycerol 3-phosphate. The glycerol site is built by arginine 84, glutamate 85, tyrosine 136, aspartate 246, and glutamine 247. 2 residues coordinate ADP: threonine 268 and glycine 311. ATP contacts are provided by threonine 268, glycine 311, glutamine 315, and glycine 412. ADP is bound by residues glycine 412 and asparagine 416.

This sequence belongs to the FGGY kinase family. As to quaternary structure, homotetramer and homodimer (in equilibrium). Heterodimer with EIIA-Glc. Binds 1 zinc ion per glycerol kinase EIIA-Glc dimer. The zinc ion is important for dimerization.

It carries out the reaction glycerol + ATP = sn-glycerol 3-phosphate + ADP + H(+). It functions in the pathway polyol metabolism; glycerol degradation via glycerol kinase pathway; sn-glycerol 3-phosphate from glycerol: step 1/1. Activity of this regulatory enzyme is affected by several metabolites. Allosterically and non-competitively inhibited by fructose 1,6-bisphosphate (FBP) and unphosphorylated phosphocarrier protein EIIA-Glc (III-Glc), an integral component of the bacterial phosphotransferase (PTS) system. Key enzyme in the regulation of glycerol uptake and metabolism. Catalyzes the phosphorylation of glycerol to yield sn-glycerol 3-phosphate. The chain is Glycerol kinase from Escherichia coli O127:H6 (strain E2348/69 / EPEC).